A 927-amino-acid chain; its full sequence is DNA polymerase alpha-binding protein (927 aa).

WD repeat units lie at residues F10–E49, K134–V173, A227–T266, and S273–T313. A phosphoserine mark is found at S377, S379, and S398. Residues T401 and T411 each carry the phosphothreonine modification. A Phosphoserine modification is found at S463. A WD 5 repeat occupies G699 to D739.

Its subcellular location is the nucleus. In terms of biological role, accessory factor for DNA replication. It plays a role in accurately duplicating the genome in vivo. This is DNA polymerase alpha-binding protein (CTF4) from Saccharomyces cerevisiae (strain ATCC 204508 / S288c) (Baker's yeast).